A 342-amino-acid polypeptide reads, in one-letter code: MVKVYYNGDIQENVLNGQKVAIIGYGSQGHAHALNLKESGVDVIVGVRKGGSYTKAQEDGHQVFTVKEAAAQADVLMVLLPDEQQKKVYDEEIKDQLEAGNSLVFAHGFNVHFHQIVPPSDVDVYLVAPKGPGHLVRRTYEQGAGVPALFAIYQDVSGQAKDKALAYAKAIGGARAGVLETTFKEETETDLFGEQAVLCGGLTSLVKAGFETLTEAGYQPELAYFECLHELKLIVDLMYEEGLEGMRYSISDTAQWGDFVSGPRVVDANVKESMKAVLTDIQNGTFAKEWIVENQVNRPRFNAINANENEHQIEVVGRKLREMMPFVKQGKKKEAVSVGAEN.

One can recognise a KARI N-terminal Rossmann domain in the interval 2–181 (VKVYYNGDIQ…GGARAGVLET (180 aa)). NADP(+) is bound by residues 25–28 (YGSQ), Arg48, Ser52, and 82–85 (DEQQ). Residue His107 is part of the active site. Gly133 is an NADP(+) binding site. One can recognise a KARI C-terminal knotted domain in the interval 182–327 (TFKEETETDL…RKLREMMPFV (146 aa)). Mg(2+) contacts are provided by Asp190, Glu194, Glu226, and Glu230. A substrate-binding site is contributed by Ser251.

It belongs to the ketol-acid reductoisomerase family. Mg(2+) is required as a cofactor.

It carries out the reaction (2R)-2,3-dihydroxy-3-methylbutanoate + NADP(+) = (2S)-2-acetolactate + NADPH + H(+). The enzyme catalyses (2R,3R)-2,3-dihydroxy-3-methylpentanoate + NADP(+) = (S)-2-ethyl-2-hydroxy-3-oxobutanoate + NADPH + H(+). It participates in amino-acid biosynthesis; L-isoleucine biosynthesis; L-isoleucine from 2-oxobutanoate: step 2/4. The protein operates within amino-acid biosynthesis; L-valine biosynthesis; L-valine from pyruvate: step 2/4. Involved in the biosynthesis of branched-chain amino acids (BCAA). Catalyzes an alkyl-migration followed by a ketol-acid reduction of (S)-2-acetolactate (S2AL) to yield (R)-2,3-dihydroxy-isovalerate. In the isomerase reaction, S2AL is rearranged via a Mg-dependent methyl migration to produce 3-hydroxy-3-methyl-2-ketobutyrate (HMKB). In the reductase reaction, this 2-ketoacid undergoes a metal-dependent reduction by NADPH to yield (R)-2,3-dihydroxy-isovalerate. This chain is Ketol-acid reductoisomerase (NADP(+)), found in Bacillus pumilus (strain SAFR-032).